A 431-amino-acid polypeptide reads, in one-letter code: ORC1-type DNA replication protein 14 (431 aa).

Residues 62 to 66, Tyr219, and Arg231 each bind ATP; that span reads TGKSL.

It belongs to the CDC6/cdc18 family.

Its function is as follows. Involved in regulation of DNA replication. The sequence is that of ORC1-type DNA replication protein 14 (cdc6n) from Haloarcula marismortui (strain ATCC 43049 / DSM 3752 / JCM 8966 / VKM B-1809) (Halobacterium marismortui).